The primary structure comprises 474 residues: Histone H2B.v2 (474 aa).

3 disordered regions span residues 99 to 123, 276 to 295, and 328 to 394; these read FNNGGNNNNNNEQDNDLQEKEQNEL, TTFTQQEQQEQFNDDKISGD, and FNDN…VNNN. Low complexity-rich tracts occupy residues 100-110, 276-286, and 329-368; these read NNGGNNNNNNE, TTFTQQEQQEQ, and NDNNNNNNNNNNNNNNNNNNNNNNININNDNDNNNNNNKN.

It belongs to the histone H2B family.

This Dictyostelium discoideum (Social amoeba) protein is Histone H2B.v2 (H2Bv2).